Reading from the N-terminus, the 161-residue chain is Cell division control protein 31 (161 aa).

EF-hand domains are found at residues 20-55, 56-91, 93-128, and 129-161; these read EQKQEIYEAFSLFDMNNDGFLDYHELKVAMKALGFE, LPKREILDLIDEYDSEGRHLMKYDDFYIVMGEKILK, DPLDEIKRAFQLFDDDHTGKISIKNLRRVAKELGET, and LTDEELRAMIEEFDLDGDGEINENEFIAICTDS. D33, N35, D37, and E44 together coordinate Ca(2+). Residue T130 is modified to Phosphothreonine. 5 residues coordinate Ca(2+): D142, D144, D146, E148, and E153.

Belongs to the centrin family. In terms of assembly, component of the spindle pole body (SPB), acting as the connector of microtubule arrays in the cytoplasm and the nucleoplasm, is involved in nuclear positioning before chromosome segregation, SPB separation, spindle formation, chromosome segregation, nuclear migration into the bud, nuclear reorientation after cytokinesis and nuclear fusion during conjugation. The SPB half-bridge, which is tightly associated with the cytoplasmic side of the nuclear envelope and the SPB, is playing a key role as the starting structure for and in the initiation of SPB duplication in G1. At the SPB half-bridge CDC31 interacts with KAR1, MPS3 and SFI1. Interacts with KIC1. Interacts with VPS13. Associates with nuclear pore complexes (NPCs).

The protein resides in the nucleus envelope. It is found in the cytoplasm. It localises to the cytoskeleton. The protein localises to the microtubule organizing center. Its subcellular location is the spindle pole body. Functionally, functions as a component of the spindle pole body (SPB) half-bridge. At the SPB, it is recruited by KAR1 and MPS3 to the SPB half-bridge and involved in the initial steps of SPB duplication. Also involved in connection with the protein kinase KIC1 in the maintenance of cell morphology and integrity. May play a role in vesicle-mediated transport, in a VPS13-dependent manner. In Saccharomyces cerevisiae (strain ATCC 204508 / S288c) (Baker's yeast), this protein is Cell division control protein 31 (CDC31).